The following is a 282-amino-acid chain: Large ribosomal subunit protein uL2 (282 aa).

Disordered stretches follow at residues 31 to 56 (EKSL…RHRG) and 226 to 282 (SVMN…GSKM). Polar residues predominate over residues 35–44 (LDSQSHSAGR). The segment covering 257-266 (TVGKKTRSKK) has biased composition (basic residues).

The protein belongs to the universal ribosomal protein uL2 family. As to quaternary structure, part of the 50S ribosomal subunit. Forms a bridge to the 30S subunit in the 70S ribosome.

Functionally, one of the primary rRNA binding proteins. Required for association of the 30S and 50S subunits to form the 70S ribosome, for tRNA binding and peptide bond formation. It has been suggested to have peptidyltransferase activity; this is somewhat controversial. Makes several contacts with the 16S rRNA in the 70S ribosome. This Levilactobacillus brevis (strain ATCC 367 / BCRC 12310 / CIP 105137 / JCM 1170 / LMG 11437 / NCIMB 947 / NCTC 947) (Lactobacillus brevis) protein is Large ribosomal subunit protein uL2.